The primary structure comprises 129 residues: MAREPQRVKRRERKNISAGVAHVNASFNNTMITITDAQGNAISWSSAGMMGFKGSRKSTPYAAQVAAEDAGKKAAEHGVRTLEVEVKGPGSGRESALRALQAVGFHITSIRDVTPIPHNGVRPSKRRRV.

It belongs to the universal ribosomal protein uS11 family. Part of the 30S ribosomal subunit. Interacts with proteins S7 and S18. Binds to IF-3.

Located on the platform of the 30S subunit, it bridges several disparate RNA helices of the 16S rRNA. Forms part of the Shine-Dalgarno cleft in the 70S ribosome. This Zymomonas mobilis subsp. mobilis (strain ATCC 31821 / ZM4 / CP4) protein is Small ribosomal subunit protein uS11.